Reading from the N-terminus, the 150-residue chain is Large ribosomal subunit protein bL9 (150 aa).

Belongs to the bacterial ribosomal protein bL9 family.

Functionally, binds to the 23S rRNA. The sequence is that of Large ribosomal subunit protein bL9 from Variovorax paradoxus (strain S110).